A 60-amino-acid chain; its full sequence is Large ribosomal subunit protein uL30 (60 aa).

Belongs to the universal ribosomal protein uL30 family. Part of the 50S ribosomal subunit.

The polypeptide is Large ribosomal subunit protein uL30 (Symbiobacterium thermophilum (strain DSM 24528 / JCM 14929 / IAM 14863 / T)).